A 142-amino-acid polypeptide reads, in one-letter code: uncharacterized protein (142 aa).

Residues 1 to 31 (MSLPKKKKPEVEEEEKPEEEEEKEEEQEIDI) are disordered. The span at 11-29 (VEEEEKPEEEEEKEEEQEI) shows a compositional bias: acidic residues.

This is an uncharacterized protein from Acidianus sp. F28 (AFV-2).